The sequence spans 243 residues: Protein VERNALIZATION 1 (243 aa).

In terms of domain architecture, MADS-box spans 1–61 (MGRGKVQLKR…GKLYEFATDS (61 aa)). In terms of domain architecture, K-box spans 88–178 (QGNWCHEYRK…QKELVEKQKA (91 aa)). The stretch at 122-178 (LKELQQLEQQLESSLKHIRSRKNQLMHESISELQRKERSLQEENKALQKELVEKQKA) forms a coiled coil. Residues 173–243 (VEKQKAHTQQ…PPWMVSHISG (71 aa)) form a disordered region. Residues 179–192 (HTQQAQWEQTHPQT) are compositionally biased toward polar residues.

It is found in the nucleus. In terms of biological role, component of a grass-specific mechanism of vernalization, a process by which prolonged cold exposure provides competence to flower in daylengths longer than 12 hours. Involved in the exit of vernalization and confers flowering competency at the expense of freezing tolerance, probably by promoting the expression of VRN3; this process is essential in cv. Bd29-1 for flowering but seems do not occur in cv. Bd21. In Brachypodium distachyon (Purple false brome), this protein is Protein VERNALIZATION 1.